We begin with the raw amino-acid sequence, 361 residues long: Zinc transporter ZIP13 (361 aa).

At 1–6 (MPGCPC) the chain is on the lumenal side. Residues 7 to 27 (PGCGMAGQRLLFLTVLALELL) form a helical membrane-spanning segment. Residues 28 to 68 (ERAGGSQPALRSLGAAAACRLDSKESESWGALLSGERLDTW) are Cytoplasmic-facing. Residues 69 to 89 (ICSLLGSLMVGLSGVFPLLVI) form a helical membrane-spanning segment. Topologically, residues 90-108 (PLEMGTMLQSEAGAWRLKQ) are lumenal. Residues 109-129 (LLSFALGGLLGNVFLHLLPEA) traverse the membrane as a helical segment. The Cytoplasmic segment spans residues 130–150 (WAYTCNISPGVEGQSLQRQQQ). Residues 151 to 171 (LGLWVIAGFLTFLALEKMFLN) form a helical membrane-spanning segment. Residues 172–233 (CKEEDPSQAP…TIDNFTHGLA (62 aa)) lie on the Lumenal side of the membrane. The chain crosses the membrane as a helical span at residues 234–254 (VAASFLVSKKIGLLTTMAILL). Positions 255–260 (HEIPHE) match the XEXPHE-motif motif. Topologically, residues 255–276 (HEIPHEVGDFAILLRAGFDRWT) are cytoplasmic. Residues 277–297 (AAKLQFSTALGGLLGACFAIC) traverse the membrane as a helical segment. Residues 298-307 (TQSPKGVEET) lie on the Lumenal side of the membrane. A helical transmembrane segment spans residues 308–328 (VVWTLPFTSGGFLYVALVNVL). Residues 329–340 (PDLLEEDDPWHL) lie on the Cytoplasmic side of the membrane. Residues 341-361 (NPPLPTGTPCSRCCCSAPVSW) form a helical membrane-spanning segment.

This sequence belongs to the ZIP transporter (TC 2.A.5) family. As to quaternary structure, homodimer.

It is found in the golgi apparatus membrane. The protein resides in the cytoplasmic vesicle membrane. Its subcellular location is the endoplasmic reticulum membrane. It catalyses the reaction Zn(2+)(in) = Zn(2+)(out). Functions as a zinc transporter transporting Zn(2+) from the Golgi apparatus to the cytosol and thus influences the zinc level at least in areas of the cytosol. May regulate beige adipocyte differentiation. This chain is Zinc transporter ZIP13, found in Rattus norvegicus (Rat).